Consider the following 229-residue polypeptide: Ribonuclease 3 (229 aa).

The RNase III domain occupies 5 to 127; the sequence is LSRLERQLGY…LIGAIYLDAG (123 aa). Glutamate 40 provides a ligand contact to Mg(2+). Aspartate 44 is an active-site residue. The Mg(2+) site is built by aspartate 113 and glutamate 116. Glutamate 116 is an active-site residue. The DRBM domain occupies 154 to 224; that stretch reads DPKTRLQEFL…AAAALIALGV (71 aa).

It belongs to the ribonuclease III family. In terms of assembly, homodimer. Mg(2+) serves as cofactor.

The protein localises to the cytoplasm. It carries out the reaction Endonucleolytic cleavage to 5'-phosphomonoester.. Digests double-stranded RNA. Involved in the processing of primary rRNA transcript to yield the immediate precursors to the large and small rRNAs (23S and 16S). Processes some mRNAs, and tRNAs when they are encoded in the rRNA operon. Processes pre-crRNA and tracrRNA of type II CRISPR loci if present in the organism. The polypeptide is Ribonuclease 3 (Pseudomonas syringae pv. syringae (strain B728a)).